The chain runs to 421 residues: MATETNENLINSFIEITSSSREEANFFLESHTWNLDAAVSTFLDNDAAAAAEPNPTGPPPPSSTIAGAQSPSQSHSPDYTPSETSPSPSRSRSASPSSRAAPYGLRSRGGAGENKETENPSGIRSSRSRQHAGNIRTFADLNRSPADGEGSDSDEANEYYTGGQKSGMMVQDPKKVKDVDELFDQARQSAVDRPVEPSRSASTSFTGAARLLSGEAVSSSPQQQQQEQPQRIMHTITFWLNGFTVNDGPLRGFSDPENAAFMNSISRSECPSELEPADKKIPVHVDLVRRGENFTEPPKPKNPFQGVGRTLGASGSGSSSAPQASSAPMNVAPAPSRGLVVDPAAPTTSIQLRLADGTRLVSRFNNHHTVRDVRGFIDASRPGGSKEYQLLTMGFPPKQLTELDQTIEQAGIANAVVIQKF.

Residues 4–45 (ETNENLINSFIEITSSSREEANFFLESHTWNLDAAVSTFLDN) enclose the UBA domain. Disordered regions lie at residues 46–171 (DAAA…MMVQ) and 292–338 (ENFT…PSRG). The segment covering 69-84 (QSPSQSHSPDYTPSET) has biased composition (polar residues). Residues 85–102 (SPSPSRSRSASPSSRAAP) show a composition bias toward low complexity. Residues 231 to 295 (RIMHTITFWL…DLVRRGENFT (65 aa)) form the SEP domain. Residues 312-328 (GASGSGSSSAPQASSAP) are compositionally biased toward low complexity. The 78-residue stretch at 343–420 (PAAPTTSIQL…GIANAVVIQK (78 aa)) folds into the UBX domain.

Interacts with CDC48A (non-hexameric) via its UBX domain.

This Arabidopsis thaliana (Mouse-ear cress) protein is Plant UBX domain-containing protein 5.